The chain runs to 82 residues: uncharacterized protein (82 aa).

The 2Fe-2S ferredoxin-type domain occupies 1–82; sequence MKIHLIRHNT…HVESDIEIDL (82 aa). [2Fe-2S] cluster is bound by residues cysteine 35, cysteine 40, cysteine 43, and cysteine 72.

Requires [2Fe-2S] cluster as cofactor.

This is an uncharacterized protein from Haemophilus influenzae (strain ATCC 51907 / DSM 11121 / KW20 / Rd).